Consider the following 118-residue polypeptide: MAHNLALGAHGEDLAARYLTEAGMEIIDRNWRSRYGEVDLIAAEGDWLVFVEVKTRRGLGYGTPAEAVTFSKQRRIRLLAVEWLRESSRHWSRVRFDVVAIMIGHGPQPQIEHVRDAF.

The protein belongs to the UPF0102 family.

The protein is UPF0102 protein ROP_66030 of Rhodococcus opacus (strain B4).